Here is a 278-residue protein sequence, read N- to C-terminus: 4-hydroxy-tetrahydrodipicolinate reductase (278 aa).

Residues 13–18 (GAAGKM) and 111–113 (GTT) each bind NAD(+). The active-site Proton donor/acceptor is histidine 167. Histidine 168 is a (S)-2,3,4,5-tetrahydrodipicolinate binding site. Lysine 171 serves as the catalytic Proton donor. 177-178 (GT) is a binding site for (S)-2,3,4,5-tetrahydrodipicolinate.

It belongs to the DapB family.

It is found in the cytoplasm. It carries out the reaction (S)-2,3,4,5-tetrahydrodipicolinate + NAD(+) + H2O = (2S,4S)-4-hydroxy-2,3,4,5-tetrahydrodipicolinate + NADH + H(+). It catalyses the reaction (S)-2,3,4,5-tetrahydrodipicolinate + NADP(+) + H2O = (2S,4S)-4-hydroxy-2,3,4,5-tetrahydrodipicolinate + NADPH + H(+). It functions in the pathway amino-acid biosynthesis; L-lysine biosynthesis via DAP pathway; (S)-tetrahydrodipicolinate from L-aspartate: step 4/4. In terms of biological role, catalyzes the conversion of 4-hydroxy-tetrahydrodipicolinate (HTPA) to tetrahydrodipicolinate. The chain is 4-hydroxy-tetrahydrodipicolinate reductase from Mastigocladus laminosus (Fischerella sp.).